Here is a 128-residue protein sequence, read N- to C-terminus: MSTLVSLPTAAPAPDYQSIDRPLHFSVAAAAKVRELIQEEGNADLALRVYIQGGGCSGFQYGFEFDENRAEDDLAVVTDGVTLLVDPLSLQYLMGAEVDYTESLTGAQFVIRNPNAKTTCGCGSSFSV.

Cys56, Cys120, and Cys122 together coordinate iron-sulfur cluster.

It belongs to the HesB/IscA family. Homodimer. Iron-sulfur cluster is required as a cofactor.

Functionally, required for insertion of 4Fe-4S clusters for at least IspG. The chain is Iron-sulfur cluster insertion protein ErpA from Xanthomonas oryzae pv. oryzae (strain MAFF 311018).